Reading from the N-terminus, the 174-residue chain is Transcription factor bHLH36 (174 aa).

One can recognise a bHLH domain in the interval 1–53; that stretch reads MEKMMHRETERQRRQEMASLYASLRSLLPLHFIKGKRSTSDQVNEAVNYIKYL.

As to quaternary structure, homodimer. In terms of tissue distribution, expressed constitutively in roots, leaves, stems, and flowers.

It is found in the nucleus. The sequence is that of Transcription factor bHLH36 (BHLH36) from Arabidopsis thaliana (Mouse-ear cress).